The chain runs to 1478 residues: Bud site selection protein 3 homolog (1478 aa).

Disordered regions lie at residues 732-889 (KSKC…PSKG), 1085-1106 (QRDS…HSSN), and 1146-1168 (YSHS…VSAP). Over residues 749-761 (LVSTNDNSRTLSP) the composition is skewed to polar residues. Over residues 763-777 (TIISRTPRTISTITP) the composition is skewed to low complexity. Polar residues predominate over residues 786 to 800 (GQASNSPARGSISTT). Residues 1146-1160 (YSHSHDEEIDSEKRA) show a composition bias toward basic and acidic residues.

The protein belongs to the BUD3 family.

The protein resides in the cell tip. The protein localises to the cell septum. Functionally, required for proper septum positioning and septum construction during septation. Acts as a landmark to mark sites for future septation, and as part of a scaffold that recruits components of the contractile ring to the site of septation. Not required to determine the site of lateral branch formation. The protein is Bud site selection protein 3 homolog (BUD3) of Eremothecium gossypii (strain ATCC 10895 / CBS 109.51 / FGSC 9923 / NRRL Y-1056) (Yeast).